We begin with the raw amino-acid sequence, 116 residues long: Large ribosomal subunit protein bL20 (116 aa).

The protein belongs to the bacterial ribosomal protein bL20 family.

In terms of biological role, binds directly to 23S ribosomal RNA and is necessary for the in vitro assembly process of the 50S ribosomal subunit. It is not involved in the protein synthesizing functions of that subunit. This Synechococcus elongatus (strain ATCC 33912 / PCC 7942 / FACHB-805) (Anacystis nidulans R2) protein is Large ribosomal subunit protein bL20.